Reading from the N-terminus, the 469-residue chain is Protopanaxadiol 6-hydroxylase (469 aa).

Residues 3-23 form a helical membrane-spanning segment; sequence LFISSQLLLLLVFCLFLFWNF. Cys-416 is a binding site for heme.

Belongs to the cytochrome P450 family. Heme is required as a cofactor. Accumulates ubiquitously in all organs of plants, including roots, stems and leaves.

It localises to the membrane. It carries out the reaction (20S)-protopanaxadiol + reduced [NADPH--hemoprotein reductase] + O2 = (20S)-protopanaxatriol + oxidized [NADPH--hemoprotein reductase] + H2O + H(+). It participates in secondary metabolite biosynthesis; terpenoid biosynthesis. With respect to regulation, activated by N,N'-dicyclohexylcarbodiimide (DCCD) thus leading to increased ginsenosides accumulation. Its function is as follows. Component of the dammarane-type triterpene saponins (e.g. PPT-type ginsenosides or panaxosides) biosynthetic pathway. Catalyzes the formation of protopanaxatriol from protopanaxadiol during ginsenoside biosynthesis, a class of tetracyclic triterpenoid saponins. This chain is Protopanaxadiol 6-hydroxylase, found in Panax ginseng (Korean ginseng).